Here is a 428-residue protein sequence, read N- to C-terminus: 3-phosphoshikimate 1-carboxyvinyltransferase (428 aa).

Residues Lys-20, Ser-21, and Arg-25 each contribute to the 3-phosphoshikimate site. Lys-20 serves as a coordination point for phosphoenolpyruvate. Gly-93 and Arg-122 together coordinate phosphoenolpyruvate. Positions 167, 169, 317, and 344 each coordinate 3-phosphoshikimate. A phosphoenolpyruvate-binding site is contributed by Gln-169. Asp-317 functions as the Proton acceptor in the catalytic mechanism. Phosphoenolpyruvate-binding residues include Arg-348 and Arg-390.

Belongs to the EPSP synthase family. Monomer.

The protein localises to the cytoplasm. It catalyses the reaction 3-phosphoshikimate + phosphoenolpyruvate = 5-O-(1-carboxyvinyl)-3-phosphoshikimate + phosphate. It functions in the pathway metabolic intermediate biosynthesis; chorismate biosynthesis; chorismate from D-erythrose 4-phosphate and phosphoenolpyruvate: step 6/7. In terms of biological role, catalyzes the transfer of the enolpyruvyl moiety of phosphoenolpyruvate (PEP) to the 5-hydroxyl of shikimate-3-phosphate (S3P) to produce enolpyruvyl shikimate-3-phosphate and inorganic phosphate. The sequence is that of 3-phosphoshikimate 1-carboxyvinyltransferase from Leptospira biflexa serovar Patoc (strain Patoc 1 / ATCC 23582 / Paris).